The following is a 202-amino-acid chain: uncharacterized protein (202 aa).

It belongs to the dienelactone hydrolase family.

This is an uncharacterized protein from Bacillus subtilis (strain 168).